Consider the following 664-residue polypeptide: Cyclic nucleotide-gated channel alpha-2 (664 aa).

Residues 1 to 10 show a composition bias toward polar residues; the sequence is MMTEKSNGVK. The disordered stretch occupies residues 1–51; it reads MMTEKSNGVKSSPANNHNHHPPPSIKANGKDDHRAGSRPQSVAADDDTSPE. The Cytoplasmic portion of the chain corresponds to 1 to 146; the sequence is MMTEKSNGVK…PAGDWYYRWL (146 aa). The chain crosses the membrane as a helical span at residues 147–168; sequence FVIAMPVLYNWCLLVARACFSD. At 169 to 178 the chain is on the extracellular side; that stretch reads LQRNYFVVWL. Residues 179–199 traverse the membrane as a helical segment; it reads VLDYFSDTVYIADLIIRLRTG. At 200 to 224 the chain is on the cytoplasmic side; it reads FLEQGLLVKDPKKLRDNYIHTLQFK. A helical transmembrane segment spans residues 225 to 243; the sequence is LDVASIIPTDLIYFAVGIH. Residues 244-248 are Extracellular-facing; the sequence is SPEVR. A helical transmembrane segment spans residues 249-267; the sequence is FNRLLHFARMFEFFDRTET. Over 268–274 the chain is Cytoplasmic; it reads RTSYPNI. An ion conduction pathway region spans residues 272–380; the sequence is PNIFRISNLV…GNVGSMISNM (109 aa). A helical membrane pass occupies residues 275–298; that stretch reads FRISNLVLYILVIIHWNACIYYVI. Residues 299-321 are Extracellular-facing; sequence SKSIGFGVDTWVYPNITDPEYGY. Helical transmembrane passes span 322-356 and 357-381; these read LAREYIYCLYWSTLTLTTIGETPPPVKDEEYLFVI and FDFLIGVLIFATIVGNVGSMISNMN. A selectivity filter region spans residues 339 to 342; it reads TIGE. Positions 382-458 are C-linker; that stretch reads ATRAEFQAKI…STLKKVRIFQ (77 aa). Topologically, residues 382-664 are cytoplasmic; it reads ATRAEFQAKI…INTPEPTAAE (283 aa). The interval 462–582 is cyclic nucleotide-binding domain; it reads AGLLVELVLK…EERGREILMK (121 aa). Residues Gly-522, Ser-525, Arg-538, and Thr-539 each contribute to the 3',5'-cyclic GMP site. The 3',5'-cyclic AMP site is built by Arg-538 and Thr-539. A coiled-coil region spans residues 599-653; that stretch reads VQEKLEQLETNMDTLYTRFARLLAEYTGAQQKLKQRITVLETKMKQNHEDDYLSD.

It belongs to the cyclic nucleotide-gated cation channel (TC 1.A.1.5) family. CNGA2 subfamily. The olfactory cyclic nucleotide-gated channel is an heterotetramer composed of CNGA2, CNGA4 and CNGB1b subunits with 2:1:1 stoichiometry. Olfactory neurons. Widely expressed in brain, enriched in deep cerebellar nuclei, olfactory bulb mitral cells and cerebellar Purkinje neurons. Expressed in olfactory sensory cilia (at protein level).

It localises to the cell projection. It is found in the cilium membrane. The enzyme catalyses Ca(2+)(in) = Ca(2+)(out). It catalyses the reaction Na(+)(in) = Na(+)(out). It carries out the reaction K(+)(in) = K(+)(out). The catalysed reaction is NH4(+)(in) = NH4(+)(out). The enzyme catalyses Rb(+)(in) = Rb(+)(out). It catalyses the reaction Li(+)(in) = Li(+)(out). It carries out the reaction Cs(+)(in) = Cs(+)(out). The channel activity is inhibited by L-cis diltiazem. In terms of biological role, pore-forming subunit of the olfactory cyclic nucleotide-gated channel. Operates in the cilia of olfactory sensory neurons where chemical stimulation of the odorant is converted to an electrical signal. Mediates odorant-induced cAMP-dependent Ca(2+) influx triggering neuron depolarization. The rise of intracellular Ca(2+) levels potentiates the olfactory response by activating Ca(2+)-dependent Cl(-) channels, but it also serves as a negative feedback signal to desensitize the channel for rapid adaptation to odorants. Conducts cAMP- and cGMP-gated ion currents, with permeability for monovalent and divalent cations. This is Cyclic nucleotide-gated channel alpha-2 from Rattus norvegicus (Rat).